Reading from the N-terminus, the 1078-residue chain is MAANSSFFLADNCAPHNQSFIQFCIHAASKKKGRIALMCLANLFLLFSFHLLYARFCSGFPYVVPSTARSTNQIFHTNLEQLVNSPENKQIFSQLKFSDQAFYDPHDNVVGTTEFPVFNQYQRQPYVANGYIGSRIPNLGQGFTYDQLTNSSTANDDDLLNGWPLFNKRYSGAFVAGFYDLQKNTTGTNFAELLENGYESVIAAVPQWTALSLSVEILGKKYTLDPSLEHEAIGDITNYVQNMSLSDGIVTTQFTWLNTFDVKYEILAHRENINLGLVNMQVYNPGNESVQVIVSDVLDFNSSQRCQLNQISHDKNGIYVTFHPQGLSYIDGAIYSTLSANGQITREQTNETVFQNVELTIEPHSCVQVAKYVGIATTDLDPDSFKTADDVLKFARKVSQNKKHGDATQLVNSHRSAWSKIIQDAPLVTFPSDSLLNLGARASIFHLLANTRPNAEGVTGALGVSGLSSDSYGGMVFWDTDLWMLNGILPFAPDHIKSFINYRVHLHQQAIDNVPRGYQGAVYPWTSGRFGNCTGTGPCLDYEYHINMAVAMASWQLYISGAADDTFLESVAYPIINDAASFLAEYVVHYNDTLGKYTTKNLTDPDEFANHVDNGAYTNTGIVLVMRWAQIAGSILGKQVPKIYHDIETAMFLPTAENTQNITLEYSGMNSSVGIKQADVIMMTYPLENELIDQDQAYINMEFYSMKQVGYGPAMTFPIFSIVASNLAFTGCASQSYLHKAIQPFLRGPFAQFAEQNNDDYLTNGGTHPAFPFLTAHGGFLQAILQGLTGMRFDYTFENNKLQRLLKLDPIALPCLGEGVRFDSIKYDNHTLSMAINETHFTIKNKGKTTPNARNYVTILLAERNAMHGKYTINDEDEQSFPLFETSESFPDSISECNKAGFFNITEGAYGDVSISINDGDNTTSWQAKYNDTTGKVLVDLKSFRNISSGTFIWGDKPPKRVKVSKYSGSSFTAVTDFFAQVDFGNELFNEYKYANPEGKLHNQSDVFEEVYSGDVKISAPFDPEEYFQVWVPTRHNITEVAVNLQTRFLLIEVDEIHNTEAIDGDYGGAKLAEVVFY.

The first 54 residues, 1-54 (MAANSSFFLADNCAPHNQSFIQFCIHAASKKKGRIALMCLANLFLLFSFHLLYA), serve as a signal peptide directing secretion. Residues N4, N17, N150, N184, N242, N287, N301, and N350 are each glycosylated (N-linked (GlcNAc...) asparagine). 478-479 (WD) serves as a coordination point for substrate. 3 N-linked (GlcNAc...) asparagine glycosylation sites follow: N532, N591, and N601. The active-site Proton donor is E607. N-linked (GlcNAc...) asparagine glycans are attached at residues N661 and N670. 676–677 (KQ) is a binding site for substrate. N-linked (GlcNAc...) asparagine glycans are attached at residues N829, N837, N904, N922, N931, N946, N1003, and N1037.

The protein belongs to the glycosyl hydrolase 65 family.

The protein localises to the secreted. The protein resides in the cell wall. It carries out the reaction alpha,alpha-trehalose + H2O = alpha-D-glucose + beta-D-glucose. Its function is as follows. Cell wall acid trehalase that catalyzes hydrolysis of the disaccharide trehalose and required for growth on trehalose as carbon source. Plays a role in dimorphic conversion and virulence. In Candida albicans (strain SC5314 / ATCC MYA-2876) (Yeast), this protein is Cell wall acid trehalase ATC1 (ATC1).